We begin with the raw amino-acid sequence, 561 residues long: Asparagine synthetase [glutamine-hydrolyzing] (561 aa).

C2 serves as the catalytic For GATase activity. Residues C2–K191 form the Glutamine amidotransferase type-2 domain. L-glutamine contacts are provided by residues R49 to V53, N75 to E77, and D97. The Asparagine synthetase domain maps to H213–Y536. ATP is bound by residues L256, I288, and S363–G364. N6-acetyllysine is present on K385. T545 is modified (phosphothreonine). Phosphoserine is present on S557.

The catalysed reaction is L-aspartate + L-glutamine + ATP + H2O = L-asparagine + L-glutamate + AMP + diphosphate + H(+). Its pathway is amino-acid biosynthesis; L-asparagine biosynthesis; L-asparagine from L-aspartate (L-Gln route): step 1/1. This is Asparagine synthetase [glutamine-hydrolyzing] (Asns) from Mus musculus (Mouse).